Reading from the N-terminus, the 1390-residue chain is DNA-directed RNA polymerase subunit beta' (1390 aa).

Residues Cys73, Cys75, Cys88, and Cys91 each contribute to the Zn(2+) site. Mg(2+) contacts are provided by Asp464, Asp466, and Asp468. Zn(2+) is bound by residues Cys810, Cys884, Cys891, and Cys894. The disordered stretch occupies residues 1365 to 1390 (EKKEQKIYGNGEEPAKEQKWIPQAGT).

This sequence belongs to the RNA polymerase beta' chain family. In terms of assembly, the RNAP catalytic core consists of 2 alpha, 1 beta, 1 beta' and 1 omega subunit. When a sigma factor is associated with the core the holoenzyme is formed, which can initiate transcription. The cofactor is Mg(2+). Zn(2+) serves as cofactor.

The catalysed reaction is RNA(n) + a ribonucleoside 5'-triphosphate = RNA(n+1) + diphosphate. DNA-dependent RNA polymerase catalyzes the transcription of DNA into RNA using the four ribonucleoside triphosphates as substrates. In Methylacidiphilum infernorum (isolate V4) (Methylokorus infernorum (strain V4)), this protein is DNA-directed RNA polymerase subunit beta'.